We begin with the raw amino-acid sequence, 178 residues long: Photosystem I assembly protein Ycf4 (178 aa).

2 consecutive transmembrane segments (helical) span residues 19 to 39 (ILVA…SLSS) and 61 to 81 (LIMG…WAVI).

Belongs to the Ycf4 family.

Its subcellular location is the cellular thylakoid membrane. Functionally, seems to be required for the assembly of the photosystem I complex. The chain is Photosystem I assembly protein Ycf4 from Synechococcus sp. (strain CC9311).